The chain runs to 459 residues: Methionine aminopeptidase 2-1 (459 aa).

The segment covering Met-1–Gly-12 has biased composition (basic and acidic residues). The disordered stretch occupies residues Met-1–Lys-79. Residues Gly-43 to Glu-54 show a composition bias toward acidic residues. Positions Lys-67–Lys-79 are enriched in basic residues. His-210 provides a ligand contact to substrate. A divalent metal cation is bound by residues Asp-231, Asp-242, and His-311. Residue His-319 participates in substrate binding. A divalent metal cation contacts are provided by Glu-344 and Glu-440.

Belongs to the peptidase M24A family. Methionine aminopeptidase eukaryotic type 2 subfamily. Requires Co(2+) as cofactor. Zn(2+) is required as a cofactor. It depends on Mn(2+) as a cofactor. The cofactor is Fe(2+).

The protein localises to the cytoplasm. The catalysed reaction is Release of N-terminal amino acids, preferentially methionine, from peptides and arylamides.. Cotranslationally removes the N-terminal methionine from nascent proteins. The N-terminal methionine is often cleaved when the second residue in the primary sequence is small and uncharged (Met-Ala-, Cys, Gly, Pro, Ser, Thr, or Val). The polypeptide is Methionine aminopeptidase 2-1 (Pyrenophora tritici-repentis (strain Pt-1C-BFP) (Wheat tan spot fungus)).